A 183-amino-acid polypeptide reads, in one-letter code: Translation initiation factor IF-3 (183 aa).

This sequence belongs to the IF-3 family. Monomer.

It localises to the cytoplasm. In terms of biological role, IF-3 binds to the 30S ribosomal subunit and shifts the equilibrium between 70S ribosomes and their 50S and 30S subunits in favor of the free subunits, thus enhancing the availability of 30S subunits on which protein synthesis initiation begins. This Serratia marcescens protein is Translation initiation factor IF-3.